Consider the following 165-residue polypeptide: E3 ubiquitin-protein ligase RNF181 (165 aa).

The segment at C88–R129 adopts an RING-type; atypical zinc-finger fold. The segment at D136–T165 is disordered. Phosphothreonine is present on T165.

This sequence belongs to the RNF181 family. In terms of assembly, directly interacts with ITGA2B and, as a result, with integrin ITGA2B/ITGB3. There is no evidence that integrin ITGA2B/ITGB3 is an endogenous substrate for RNF181-directed ubiquitination. Auto-ubiquitinated as part of the enzymatic reaction.

It catalyses the reaction S-ubiquitinyl-[E2 ubiquitin-conjugating enzyme]-L-cysteine + [acceptor protein]-L-lysine = [E2 ubiquitin-conjugating enzyme]-L-cysteine + N(6)-ubiquitinyl-[acceptor protein]-L-lysine.. The protein operates within protein modification; protein ubiquitination. E3 ubiquitin-protein ligase which accepts ubiquitin from an E2 ubiquitin-conjugating enzyme in the form of a thioester and then directly transfers the ubiquitin to targeted substrates. Catalyzes monoubiquitination of 26S proteasome subunit PSMC2/RPT1. The chain is E3 ubiquitin-protein ligase RNF181 (Rnf181) from Rattus norvegicus (Rat).